A 452-amino-acid polypeptide reads, in one-letter code: Serine carboxypeptidase-like 26 (452 aa).

The signal sequence occupies residues 1–20 (MARLLLLFFFFLILLHYASC). N-linked (GlcNAc...) asparagine glycosylation is found at N52 and N138. Intrachain disulfides connect C87-C338, C244-C256, and C280-C306. S180 is an active-site residue. A glycan (N-linked (GlcNAc...) asparagine) is linked at N327. Residues D375 and H427 contribute to the active site.

It belongs to the peptidase S10 family. In terms of tissue distribution, ubiquitous.

Its subcellular location is the secreted. Its function is as follows. Probable carboxypeptidase. This chain is Serine carboxypeptidase-like 26 (SCPL26), found in Arabidopsis thaliana (Mouse-ear cress).